We begin with the raw amino-acid sequence, 225 residues long: ATP-dependent Clp protease proteolytic subunit (225 aa).

Serine 126 acts as the Nucleophile in catalysis. Histidine 151 is an active-site residue.

This sequence belongs to the peptidase S14 family. As to quaternary structure, fourteen ClpP subunits assemble into 2 heptameric rings which stack back to back to give a disk-like structure with a central cavity, resembling the structure of eukaryotic proteasomes.

The protein resides in the cytoplasm. The catalysed reaction is Hydrolysis of proteins to small peptides in the presence of ATP and magnesium. alpha-casein is the usual test substrate. In the absence of ATP, only oligopeptides shorter than five residues are hydrolyzed (such as succinyl-Leu-Tyr-|-NHMec, and Leu-Tyr-Leu-|-Tyr-Trp, in which cleavage of the -Tyr-|-Leu- and -Tyr-|-Trp bonds also occurs).. Cleaves peptides in various proteins in a process that requires ATP hydrolysis. Has a chymotrypsin-like activity. Plays a major role in the degradation of misfolded proteins. The protein is ATP-dependent Clp protease proteolytic subunit of Psychrobacter arcticus (strain DSM 17307 / VKM B-2377 / 273-4).